Reading from the N-terminus, the 758-residue chain is Relaxin receptor 1 (758 aa).

Residues 1 to 409 (MTSGPFFFCI…ENLLASIIQR (409 aa)) lie on the Extracellular side of the membrane. The LDL-receptor class A domain maps to 26–63 (SCPLGSFPCGNMSRCLPQLLHCNGVDDCGNRADEDHCG). 3 cysteine pairs are disulfide-bonded: cysteine 27–cysteine 40, cysteine 34–cysteine 53, and cysteine 47–cysteine 62. Asparagine 36 carries N-linked (GlcNAc...) asparagine glycosylation. Residues leucine 45, asparagine 48, valine 50, aspartate 52, aspartate 58, and glutamate 59 each coordinate Ca(2+). The N-linked (GlcNAc...) asparagine glycan is linked to asparagine 127. LRR repeat units lie at residues 127-148 (NVTV…GFRK), 151-172 (ELQK…AFRG), 175-196 (SLTK…VFED), 199-220 (RLEW…TFYG), 223-244 (SLIL…PLCQ), 248-269 (RLHW…TFIS), 272-293 (NLTV…AFTH), 296-317 (KLDE…IFKD), 320-341 (ELSQ…QFDC), and 344-365 (KLKS…MFRP). 2 N-linked (GlcNAc...) asparagine glycosylation sites follow: asparagine 264 and asparagine 272. N-linked (GlcNAc...) asparagine glycosylation is present at asparagine 325. Asparagine 368 carries N-linked (GlcNAc...) asparagine glycosylation. A helical transmembrane segment spans residues 410–430 (VFVWVVSAITCFGNIFVICMR). Over 431 to 443 (PYIRSENKLHAMS) the chain is Cytoplasmic. A helical membrane pass occupies residues 444 to 464 (IISLCCADCLMGVYLFVIGAF). The Extracellular segment spans residues 465-486 (DLKFRGEYNKHAQPWMESVHCQ). The cysteines at positions 485 and 563 are disulfide-linked. Residues 487 to 507 (FMGSLAILSTEVSVLLLTFLT) traverse the membrane as a helical segment. Residues 508–527 (LEKYICIVYPFRCLRPRKCR) are Cytoplasmic-facing. A helical transmembrane segment spans residues 528–548 (TITVLIFIWIIGFIVAFAPLG). Over 549-577 (NKEFFKNYYGTNGVCFPLHSEDTGSTGAQ) the chain is Extracellular. A helical membrane pass occupies residues 578 to 598 (IYSVVIFLGINLVAFIIIVFS). The Cytoplasmic portion of the chain corresponds to 599-629 (YGSMFYSVHQSSVTVTEIQKQVKKEVVLAKR). Residues 630-650 (FFFIVFTDALCWIPIFILKFL) traverse the membrane as a helical segment. Residue serine 651 is a topological domain, extracellular. The helical transmembrane segment at 652 to 672 (LLQVEIPDSITSWVVIFILPI) threads the bilayer. Topologically, residues 673–758 (NSALNPIIYT…SQSSRLNSYS (86 aa)) are cytoplasmic.

It belongs to the G-protein coupled receptor 1 family. As to quaternary structure, interacts with C1QTNF8.

The protein resides in the cell membrane. Functionally, receptor for relaxins. The activity of this receptor is mediated by G proteins leading to stimulation of adenylate cyclase and an increase of cAMP. Binding of the ligand may also activate a tyrosine kinase pathway that inhibits the activity of a phosphodiesterase that degrades cAMP. The sequence is that of Relaxin receptor 1 (Rxfp1) from Mus musculus (Mouse).